Consider the following 89-residue polypeptide: Small ribosomal subunit protein uS15 (89 aa).

Over residues 1 to 21 the composition is skewed to basic and acidic residues; it reads MSITPERKQEMIKDYATKEGD. Residues 1–23 form a disordered region; sequence MSITPERKQEMIKDYATKEGDTG.

The protein belongs to the universal ribosomal protein uS15 family. Part of the 30S ribosomal subunit. Forms a bridge to the 50S subunit in the 70S ribosome, contacting the 23S rRNA.

Functionally, one of the primary rRNA binding proteins, it binds directly to 16S rRNA where it helps nucleate assembly of the platform of the 30S subunit by binding and bridging several RNA helices of the 16S rRNA. Forms an intersubunit bridge (bridge B4) with the 23S rRNA of the 50S subunit in the ribosome. This chain is Small ribosomal subunit protein uS15, found in Rhodospirillum rubrum (strain ATCC 11170 / ATH 1.1.1 / DSM 467 / LMG 4362 / NCIMB 8255 / S1).